The sequence spans 57 residues: Cytochrome b-c1 complex subunit 10, mitochondrial (57 aa).

Residues 1–23 (MAGTSGLLNAVKPKIQTIDIQAA) are Mitochondrial matrix-facing. Residues 24–44 (AGWGIAAAAGAIWVVQPFGWI) traverse the membrane as a helical segment. The Mitochondrial intermembrane portion of the chain corresponds to 45-57 (KKTFIDPPPTEEK).

The protein belongs to the UQCR11/QCR10 family. As to quaternary structure, component of the ubiquinol-cytochrome c oxidoreductase (cytochrome b-c1 complex, complex III, CIII), a multisubunit enzyme composed of 10 subunits. The complex is composed of 3 respiratory subunits cytochrome b (MT-CYB), cytochrome c1 (CYC1-1 or CYC1-2) and Rieske protein (UCR1-1 or UCR1-2), 2 core protein subunits MPPalpha1 (or MPPalpha2) and MPPB, and 5 low-molecular weight protein subunits QCR7-1 (or QCR7-2), UCRQ-1 (or UCRQ-2), QCR9, UCRY and probably QCR6-1 (or QCR6-2). The complex exists as an obligatory dimer and forms supercomplexes (SCs) in the inner mitochondrial membrane with NADH-ubiquinone oxidoreductase (complex I, CI), resulting in different assemblies (supercomplexes SCI(1)III(2) and SCI(2)III(4)).

It localises to the mitochondrion inner membrane. Functionally, component of the ubiquinol-cytochrome c oxidoreductase, a multisubunit transmembrane complex that is part of the mitochondrial electron transport chain which drives oxidative phosphorylation. The respiratory chain contains 3 multisubunit complexes succinate dehydrogenase (complex II, CII), ubiquinol-cytochrome c oxidoreductase (cytochrome b-c1 complex, complex III, CIII) and cytochrome c oxidase (complex IV, CIV), that cooperate to transfer electrons derived from NADH and succinate to molecular oxygen, creating an electrochemical gradient over the inner membrane that drives transmembrane transport and the ATP synthase. The cytochrome b-c1 complex catalyzes electron transfer from ubiquinol to cytochrome c, linking this redox reaction to translocation of protons across the mitochondrial inner membrane, with protons being carried across the membrane as hydrogens on the quinol. In the process called Q cycle, 2 protons are consumed from the matrix, 4 protons are released into the intermembrane space and 2 electrons are passed to cytochrome c. The protein is Cytochrome b-c1 complex subunit 10, mitochondrial (UCRY) of Arabidopsis thaliana (Mouse-ear cress).